A 1404-amino-acid chain; its full sequence is DNA-directed RNA polymerase subunit beta' (1404 aa).

Residues Cys70, Cys72, Cys85, and Cys88 each contribute to the Zn(2+) site. The Mg(2+) site is built by Asp460, Asp462, and Asp464. Residues Cys825, Cys899, Cys906, and Cys909 each contribute to the Zn(2+) site.

It belongs to the RNA polymerase beta' chain family. As to quaternary structure, the RNAP catalytic core consists of 2 alpha, 1 beta, 1 beta' and 1 omega subunit. When a sigma factor is associated with the core the holoenzyme is formed, which can initiate transcription. Requires Mg(2+) as cofactor. Zn(2+) serves as cofactor.

It carries out the reaction RNA(n) + a ribonucleoside 5'-triphosphate = RNA(n+1) + diphosphate. Functionally, DNA-dependent RNA polymerase catalyzes the transcription of DNA into RNA using the four ribonucleoside triphosphates as substrates. The polypeptide is DNA-directed RNA polymerase subunit beta' (Nitrosomonas eutropha (strain DSM 101675 / C91 / Nm57)).